We begin with the raw amino-acid sequence, 590 residues long: uncharacterized protein (590 aa).

2 disordered regions span residues 306–329 and 528–590; these read IAEPQTHTGGADRQRPQRPDGIPY and QPAP…LMNL. Pro residues predominate over residues 543 to 563; that stretch reads PSLPQPVPEPLAPQEPPPPGT.

This is an uncharacterized protein from Ictaluridae (bullhead catfishes).